The chain runs to 591 residues: Probable LRR receptor-like serine/threonine-protein kinase At1g69990 (591 aa).

A signal peptide spans Met1 to Ala18. Residues Glu19 to Ala218 lie on the Extracellular side of the membrane. Asn46 is a glycosylation site (N-linked (GlcNAc...) asparagine). LRR repeat units follow at residues Arg66–Cys88, Ser90–Ser111, Tyr115–Cys137, Phe139–Asn162, and Arg163–Tyr185. Asn211 carries an N-linked (GlcNAc...) asparagine glycan. Residues Gly219–Ile239 traverse the membrane as a helical segment. Residues Arg240–Lys591 are Cytoplasmic-facing. Phosphothreonine is present on Thr292. The Protein kinase domain maps to Phe295 to Phe573. Residues Val301–Ser309 and Lys323 each bind ATP. Phosphoserine is present on Ser378. Residue Thr389 is modified to Phosphothreonine. The residue at position 463 (Tyr463) is a Phosphotyrosine. Residue Ser465 is modified to Phosphoserine. Thr466 bears the Phosphothreonine mark. Position 470 is a phosphoserine (Ser470).

The protein belongs to the protein kinase superfamily. Ser/Thr protein kinase family.

It is found in the membrane. The enzyme catalyses L-seryl-[protein] + ATP = O-phospho-L-seryl-[protein] + ADP + H(+). It carries out the reaction L-threonyl-[protein] + ATP = O-phospho-L-threonyl-[protein] + ADP + H(+). This is Probable LRR receptor-like serine/threonine-protein kinase At1g69990 from Arabidopsis thaliana (Mouse-ear cress).